A 401-amino-acid polypeptide reads, in one-letter code: Mitochondrial distribution and morphology protein 12 (401 aa).

One can recognise an SMP-LTD domain in the interval 1 to 401 (MSIDINWDTL…VYPSFWTFLV (401 aa)). A compositionally biased stretch (acidic residues) spans 70–88 (YEEDEDYPDNEDDDDDEAG). Disordered stretches follow at residues 70–95 (YEED…NPRN) and 190–247 (SLTL…EKSP). Positions 195–205 (PQSHPDPSSRP) are enriched in low complexity. A compositionally biased stretch (basic and acidic residues) spans 209–220 (HQHDDERRRSLA).

Belongs to the MDM12 family. As to quaternary structure, component of the ER-mitochondria encounter structure (ERMES) or MDM complex, composed of MMM1, MDM10, MDM12 and MDM34. An MMM1 homodimer associates with one molecule of MDM12 on each side in a pairwise head-to-tail manner, and the SMP-LTD domains of MMM1 and MDM12 generate a continuous hydrophobic tunnel for phospholipid trafficking.

The protein resides in the mitochondrion outer membrane. The protein localises to the endoplasmic reticulum membrane. Component of the ERMES/MDM complex, which serves as a molecular tether to connect the endoplasmic reticulum (ER) and mitochondria. Components of this complex are involved in the control of mitochondrial shape and protein biogenesis, and function in nonvesicular lipid trafficking between the ER and mitochondria. MDM12 is required for the interaction of the ER-resident membrane protein MMM1 and the outer mitochondrial membrane-resident beta-barrel protein MDM10. The MDM12-MMM1 subcomplex functions in the major beta-barrel assembly pathway that is responsible for biogenesis of all mitochondrial outer membrane beta-barrel proteins, and acts in a late step after the SAM complex. The MDM10-MDM12-MMM1 subcomplex further acts in the TOM40-specific pathway after the action of the MDM12-MMM1 complex. Essential for establishing and maintaining the structure of mitochondria and maintenance of mtDNA nucleoids. The polypeptide is Mitochondrial distribution and morphology protein 12 (Phaeosphaeria nodorum (strain SN15 / ATCC MYA-4574 / FGSC 10173) (Glume blotch fungus)).